The sequence spans 416 residues: Multifunctional CCA protein (416 aa).

G8 and R11 together coordinate ATP. CTP-binding residues include G8 and R11. Residues D21 and D23 each contribute to the Mg(2+) site. R91, R138, and R141 together coordinate ATP. R91, R138, and R141 together coordinate CTP. Residues 229-331 (TGLHQELVSD…YELLQRCDAF (103 aa)) enclose the HD domain.

The protein belongs to the tRNA nucleotidyltransferase/poly(A) polymerase family. Bacterial CCA-adding enzyme type 1 subfamily. As to quaternary structure, monomer. Can also form homodimers and oligomers. Requires Mg(2+) as cofactor. It depends on Ni(2+) as a cofactor.

The enzyme catalyses a tRNA precursor + 2 CTP + ATP = a tRNA with a 3' CCA end + 3 diphosphate. It catalyses the reaction a tRNA with a 3' CCA end + 2 CTP + ATP = a tRNA with a 3' CCACCA end + 3 diphosphate. In terms of biological role, catalyzes the addition and repair of the essential 3'-terminal CCA sequence in tRNAs without using a nucleic acid template. Adds these three nucleotides in the order of C, C, and A to the tRNA nucleotide-73, using CTP and ATP as substrates and producing inorganic pyrophosphate. tRNA 3'-terminal CCA addition is required both for tRNA processing and repair. Also involved in tRNA surveillance by mediating tandem CCA addition to generate a CCACCA at the 3' terminus of unstable tRNAs. While stable tRNAs receive only 3'-terminal CCA, unstable tRNAs are marked with CCACCA and rapidly degraded. The sequence is that of Multifunctional CCA protein from Xylella fastidiosa (strain 9a5c).